Here is a 361-residue protein sequence, read N- to C-terminus: Homocitrate synthase (361 aa).

Positions M1–Y249 constitute a Pyruvate carboxyltransferase domain. R8 is a binding site for 2-oxoglutarate. E9 is a Mg(2+) binding site. Residues H68, R128, and T162 each coordinate 2-oxoglutarate. Mg(2+)-binding residues include H188 and H190. Catalysis depends on H282, which acts as the Proton acceptor.

It belongs to the alpha-IPM synthase/homocitrate synthase family. Homocitrate synthase LYS20/LYS21 subfamily. Mg(2+) serves as cofactor. It depends on Mn(2+) as a cofactor.

The enzyme catalyses acetyl-CoA + 2-oxoglutarate + H2O = (2R)-homocitrate + CoA + H(+). It functions in the pathway amino-acid biosynthesis; L-lysine biosynthesis via AAA pathway; L-alpha-aminoadipate from 2-oxoglutarate: step 1/5. In terms of biological role, catalyzes the aldol-type condensation of 2-oxoglutarate with acetyl-CoA to yield homocitrate. Carries out the first step of the alpha-aminoadipate (AAA) lysine biosynthesis pathway. The polypeptide is Homocitrate synthase (Pyrococcus horikoshii (strain ATCC 700860 / DSM 12428 / JCM 9974 / NBRC 100139 / OT-3)).